Consider the following 545-residue polypeptide: High-molecular-weight cytochrome c (545 aa).

An N-terminal signal peptide occupies residues 1–31 (MRNGRTLLRWAGVLAATAIIGVGGFWSQGTT). Heme c is bound by residues H66, H69, C80, C83, H84, H111, C114, C117, H118, C135, C138, H139, H159, H162, C178, C181, H182, H183, C202, C205, H206, H222, C225, C228, H229, C244, C247, H248, H298, H301, C308, C311, H312, H313, C319, C322, H323, H341, C349, C352, H353, C362, C365, H366, C378, C381, H382, H449, H470, C477, C480, H481, H482, C493, C496, H497, H516, C519, C522, H523, C536, C539, and H540.

Monomer. In terms of processing, binds 16 heme c groups per subunit. High-spin heme 15 has single axial histidine ligand and the other hemes are low-spin bis-histidinyl coordinated.

It localises to the periplasm. In terms of biological role, HMWC (high-molecular-weight cytochrome c), ORF2, ORF3, ORF4, ORF5 and ORF6 in the HMC operon form a transmembrane protein complex that allows electron flow from the periplasmic hydrogenase to the cytoplasmic enzymes that catalyze reduction of sulfates. The polypeptide is High-molecular-weight cytochrome c (hmcA) (Nitratidesulfovibrio vulgaris (strain ATCC 29579 / DSM 644 / CCUG 34227 / NCIMB 8303 / VKM B-1760 / Hildenborough) (Desulfovibrio vulgaris)).